The primary structure comprises 217 residues: Adenylate kinase (217 aa).

Residue 10–15 (GAGKGT) coordinates ATP. The NMP stretch occupies residues 30 to 59 (STGDMLRAAIREGTELGLKAKSVMESGGLV). Residues Thr-31, Arg-36, 57-59 (GLV), 85-88 (GFPR), and Gln-92 each bind AMP. Positions 122–159 (GRRQHPASGRVYHVVYNPPKVEGKDDETGEDLVQRPDD) are LID. Residues Arg-123 and 132–133 (VY) contribute to the ATP site. 2 residues coordinate AMP: Arg-156 and Arg-167. Arg-202 contributes to the ATP binding site.

The protein belongs to the adenylate kinase family. In terms of assembly, monomer.

It localises to the cytoplasm. The enzyme catalyses AMP + ATP = 2 ADP. The protein operates within purine metabolism; AMP biosynthesis via salvage pathway; AMP from ADP: step 1/1. Its function is as follows. Catalyzes the reversible transfer of the terminal phosphate group between ATP and AMP. Plays an important role in cellular energy homeostasis and in adenine nucleotide metabolism. The polypeptide is Adenylate kinase (Acinetobacter baumannii (strain AB307-0294)).